Consider the following 451-residue polypeptide: MVPPIPPRPLRAHRSTPLSGRIRVPGDKSISHRALMLGGLAVGRTEIRGLLEGEDVIATAHAMEAMGARIDRQETADGAGVWTVDGVGVGGLAEPADVLDMGNAGTGARLLMGLLATHDLTAILTGDASLRGRPMKRVTDPLALFGASFVGRSGGRLPMAVRGTATPLPVSYRVPVPSAQVKSAVLLAGLNTPGETTVIEPVATRDHTERMLGHFGAALRLGRDDQGATTITLTGQPELRAAPVEVPADPSSAAFPLVAAVLVPESHVTLAGVGMNPQRIGLIDTLREMGADILIRDPRIEAGEPVADLEVRASALTGIEVPAARAPSMIDEYPILAVAAACARGTTRMHGLGELRVKESDRLSAVATGLAACGVDVTVDGDTLIVHGKGTVPKGGATVAVNLDHRIGMAFLVLGLVSAEAVTIDDGRAIDTSFPGFVTLMTGLGAPISLI.

Lysine 28, serine 29, and arginine 33 together coordinate 3-phosphoshikimate. Phosphoenolpyruvate is bound at residue lysine 28. Glycine 105 and arginine 133 together coordinate phosphoenolpyruvate. 3-phosphoshikimate contacts are provided by serine 178, glutamine 180, aspartate 331, and lysine 358. Glutamine 180 is a phosphoenolpyruvate binding site. The active-site Proton acceptor is the aspartate 331. Phosphoenolpyruvate contacts are provided by arginine 362 and arginine 406.

Belongs to the EPSP synthase family. In terms of assembly, monomer.

The protein resides in the cytoplasm. The catalysed reaction is 3-phosphoshikimate + phosphoenolpyruvate = 5-O-(1-carboxyvinyl)-3-phosphoshikimate + phosphate. It participates in metabolic intermediate biosynthesis; chorismate biosynthesis; chorismate from D-erythrose 4-phosphate and phosphoenolpyruvate: step 6/7. Catalyzes the transfer of the enolpyruvyl moiety of phosphoenolpyruvate (PEP) to the 5-hydroxyl of shikimate-3-phosphate (S3P) to produce enolpyruvyl shikimate-3-phosphate and inorganic phosphate. This chain is 3-phosphoshikimate 1-carboxyvinyltransferase, found in Rhodospirillum rubrum (strain ATCC 11170 / ATH 1.1.1 / DSM 467 / LMG 4362 / NCIMB 8255 / S1).